A 102-amino-acid chain; its full sequence is Small ribosomal subunit protein uS10 (102 aa).

It belongs to the universal ribosomal protein uS10 family. Part of the 30S ribosomal subunit.

Involved in the binding of tRNA to the ribosomes. This Bifidobacterium adolescentis (strain ATCC 15703 / DSM 20083 / NCTC 11814 / E194a) protein is Small ribosomal subunit protein uS10.